We begin with the raw amino-acid sequence, 306 residues long: Acetyl-coenzyme A carboxylase carboxyl transferase subunit beta (306 aa).

The CoA carboxyltransferase N-terminal domain occupies 28–297; sequence LWIKCPDTGQ…TPAGKPSTPV (270 aa). The tract at residues 287-306 is disordered; the sequence is QTPAGKPSTPVAPEPVPDAA. Over residues 296–306 the composition is skewed to pro residues; sequence PVAPEPVPDAA.

This sequence belongs to the AccD/PCCB family. As to quaternary structure, acetyl-CoA carboxylase is a heterohexamer composed of biotin carboxyl carrier protein (AccB), biotin carboxylase (AccC) and two subunits each of ACCase subunit alpha (AccA) and ACCase subunit beta (AccD).

The protein localises to the cytoplasm. It carries out the reaction N(6)-carboxybiotinyl-L-lysyl-[protein] + acetyl-CoA = N(6)-biotinyl-L-lysyl-[protein] + malonyl-CoA. The protein operates within lipid metabolism; malonyl-CoA biosynthesis; malonyl-CoA from acetyl-CoA: step 1/1. In terms of biological role, component of the acetyl coenzyme A carboxylase (ACC) complex. Biotin carboxylase (BC) catalyzes the carboxylation of biotin on its carrier protein (BCCP) and then the CO(2) group is transferred by the transcarboxylase to acetyl-CoA to form malonyl-CoA. The protein is Acetyl-coenzyme A carboxylase carboxyl transferase subunit beta of Methylorubrum populi (strain ATCC BAA-705 / NCIMB 13946 / BJ001) (Methylobacterium populi).